Reading from the N-terminus, the 313-residue chain is Glutathione S-transferase omega-like 2 (313 aa).

Cysteine 49 (nucleophile) is an active-site residue. One can recognise a GST C-terminal domain in the interval 161 to 289 (PSSLRTKIDE…TDFKHIKCHY (129 aa)).

Belongs to the GST superfamily. Omega family.

Its subcellular location is the cytoplasm. The protein localises to the nucleus. The protein resides in the golgi apparatus. It catalyses the reaction RX + glutathione = an S-substituted glutathione + a halide anion + H(+). It carries out the reaction L-dehydroascorbate + 2 glutathione = glutathione disulfide + L-ascorbate. Functionally, active as '1-Cys' thiol transferase against beta-hydroxyethyl disulfide (HED), as dehydroascorbate reductase and as dimethylarsinic acid reductase, while not active against the standard GST substrate 1-chloro-2,4-dinitrobenzene (CDNB). May be involved in cell wall organization and biogenesis. The sequence is that of Glutathione S-transferase omega-like 2 (gto2) from Schizosaccharomyces pombe (strain 972 / ATCC 24843) (Fission yeast).